We begin with the raw amino-acid sequence, 491 residues long: Probable protein phosphatase 2C 6 (491 aa).

Basic and acidic residues predominate over residues 1–16 (MGLCHSKIDKTTRKET). The disordered stretch occupies residues 1-39 (MGLCHSKIDKTTRKETGATSTATTTVERQSSGRLRRPRD). The span at 17-28 (GATSTATTTVER) shows a compositional bias: low complexity. The PPM-type phosphatase domain maps to 64 to 376 (IACLYTQQGK…DDCAVVCLFL (313 aa)). 4 residues coordinate Mn(2+): aspartate 100, glycine 101, aspartate 321, and aspartate 367. The disordered stretch occupies residues 391–422 (VNHSHEESTESVTITSSKDADKKEEASTETNE).

The protein belongs to the PP2C family. Mg(2+) serves as cofactor. Mn(2+) is required as a cofactor.

It catalyses the reaction O-phospho-L-seryl-[protein] + H2O = L-seryl-[protein] + phosphate. The enzyme catalyses O-phospho-L-threonyl-[protein] + H2O = L-threonyl-[protein] + phosphate. The sequence is that of Probable protein phosphatase 2C 6 from Arabidopsis thaliana (Mouse-ear cress).